The sequence spans 368 residues: Ankyrin repeat domain-containing protein 40 (368 aa).

Met1 carries the N-acetylmethionine modification. 2 ANK repeats span residues 9-38 and 43-72; these read EQQE…DVNS and NGWT…DKEI. 3 disordered regions span residues 93 to 115, 139 to 176, and 196 to 238; these read MGVE…KKES, DSAQ…GTFP, and ILRT…NGTY. Acidic residues predominate over residues 95-107; the sequence is VEEEDDDDDDDDN. Residues 149-169 are compositionally biased toward pro residues; sequence STPPASPPADGSPPLLPPGEP. Residues 212–224 are compositionally biased toward polar residues; the sequence is PVSQSRSLFSSVP.

In Homo sapiens (Human), this protein is Ankyrin repeat domain-containing protein 40 (ANKRD40).